Consider the following 180-residue polypeptide: ATP-dependent protease subunit HslV (180 aa).

Thr7 is an active-site residue. Ala163, Cys166, and Thr169 together coordinate Na(+).

It belongs to the peptidase T1B family. HslV subfamily. As to quaternary structure, a double ring-shaped homohexamer of HslV is capped on each side by a ring-shaped HslU homohexamer. The assembly of the HslU/HslV complex is dependent on binding of ATP.

It localises to the cytoplasm. The enzyme catalyses ATP-dependent cleavage of peptide bonds with broad specificity.. Allosterically activated by HslU binding. In terms of biological role, protease subunit of a proteasome-like degradation complex believed to be a general protein degrading machinery. This Cytophaga hutchinsonii (strain ATCC 33406 / DSM 1761 / CIP 103989 / NBRC 15051 / NCIMB 9469 / D465) protein is ATP-dependent protease subunit HslV.